The sequence spans 220 residues: MSAISRSALAVDFVGGAVGYKLRSGAARSHALLKATGVSANRPLHVIDATAGLGRDSFLLASMGATVTLIERSPQVHALLAQGLEAARAESDEIAAIVARMTLIHGDARALLPTLQADVVTVDPMHPARTKTALVKQEMRLLREMVGADPDVADLMQAALVARCGRVVLKWPLRAEPLAGIRKPSYQIAGKTVRYDVFVNPRAPAEEALPRADDLALFRF.

S-adenosyl-L-methionine is bound by residues 55–56 (RD), 71–72 (ER), and aspartate 123.

This sequence belongs to the methyltransferase superfamily. RsmJ family.

It localises to the cytoplasm. The catalysed reaction is guanosine(1516) in 16S rRNA + S-adenosyl-L-methionine = N(2)-methylguanosine(1516) in 16S rRNA + S-adenosyl-L-homocysteine + H(+). Functionally, specifically methylates the guanosine in position 1516 of 16S rRNA. The sequence is that of Ribosomal RNA small subunit methyltransferase J from Rhodopseudomonas palustris (strain BisB5).